We begin with the raw amino-acid sequence, 322 residues long: Thioredoxin reductase (322 aa).

Residues 11–14, 40–41, Gln-45, Asn-54, Val-87, and Cys-145 contribute to the FAD site; these read SGPA and IA. Cys-142 and Cys-145 are disulfide-bonded. Position 192 is a phosphoserine (Ser-192). Phosphothreonine is present on Thr-278. Residue Ser-279 is modified to Phosphoserine. Residues Asp-288 and 295-297 contribute to the FAD site; that span reads RQA.

This sequence belongs to the class-II pyridine nucleotide-disulfide oxidoreductase family. In terms of assembly, homodimer. Requires FAD as cofactor.

Its subcellular location is the cytoplasm. The catalysed reaction is [thioredoxin]-dithiol + NADP(+) = [thioredoxin]-disulfide + NADPH + H(+). In Schizosaccharomyces pombe (strain 972 / ATCC 24843) (Fission yeast), this protein is Thioredoxin reductase (trr1).